A 201-amino-acid polypeptide reads, in one-letter code: Ribosome maturation factor RimP (201 aa).

This sequence belongs to the RimP family.

Its subcellular location is the cytoplasm. Functionally, required for maturation of 30S ribosomal subunits. The protein is Ribosome maturation factor RimP of Acidobacterium capsulatum (strain ATCC 51196 / DSM 11244 / BCRC 80197 / JCM 7670 / NBRC 15755 / NCIMB 13165 / 161).